We begin with the raw amino-acid sequence, 158 residues long: Phosphopantetheine adenylyltransferase (158 aa).

Thr-10 provides a ligand contact to substrate. Residues 10–11 (TF) and His-18 each bind ATP. Lys-42, Leu-74, and Arg-88 together coordinate substrate. ATP-binding positions include 89–91 (GLR), Glu-99, and 124–130 (YSFISSS).

It belongs to the bacterial CoaD family. As to quaternary structure, homohexamer. Requires Mg(2+) as cofactor.

The protein localises to the cytoplasm. It catalyses the reaction (R)-4'-phosphopantetheine + ATP + H(+) = 3'-dephospho-CoA + diphosphate. The protein operates within cofactor biosynthesis; coenzyme A biosynthesis; CoA from (R)-pantothenate: step 4/5. Reversibly transfers an adenylyl group from ATP to 4'-phosphopantetheine, yielding dephospho-CoA (dPCoA) and pyrophosphate. This is Phosphopantetheine adenylyltransferase from Erwinia tasmaniensis (strain DSM 17950 / CFBP 7177 / CIP 109463 / NCPPB 4357 / Et1/99).